A 484-amino-acid chain; its full sequence is Probable autolysin PH (484 aa).

In terms of domain architecture, Peptidase C51 spans 5 to 148 (KNQAEKWFDN…YYDDPMYFIR (144 aa)). The region spanning 181 to 363 (IMLVAGHGYN…YSKLIAGAIH (183 aa)) is the MurNAc-LAA domain. In terms of domain architecture, SH3b spans 402–472 (KETGYYTVAN…IATGEVDKAG (71 aa)).

It carries out the reaction Hydrolyzes the link between N-acetylmuramoyl residues and L-amino acid residues in certain cell-wall glycopeptides.. In terms of biological role, has weak lytic activity toward S.aureus cells. Full-length protein has no activity, but fusion of the Peptidase C51 domain to the lysostaphin SH3 cell wall binding domain yields an active chimeric enzyme, suggesting that PH may be functional. This is Probable autolysin PH from Staphylococcus aureus (strain NCTC 8325 / PS 47).